A 693-amino-acid chain; its full sequence is MNNLDSSLQAHNKLEKEATNLALLKDRVDKYHDLSTQMSSILTIFEKRLGNLEQTILPVYQETEQLQKRQQNLEATLNCLESVLSHYDVSQEVCQLIHQGPVEGNISVFLDALAKLRDANDYFRHNNSQSVELENVTSLFNTGCEGLSQHYSMLLKKHSAPLKPVELLDLIYIEDDSSDEYTSFRQLSQTTREELYTISHWLEQNLREYTNIYATERGEVVLRSLQLLKDHQKSNSWGHEALRPRHSGRQTEPKKTTSARLQQIFEKKANKLYLRATQTIEQSTGFSIKKASSHSDHLTSEDLMDGDQELDKYLVMLLGLQRLLNWERAIMIDIIPQSKHNEVFATLAYNAIDLVVKDAEAITQRILRCISRKEWTSALGIFSALKRVILLQPDIDRTYDPAQREQLKKVLKKLQHTGAKALEHFLDVVKGESSTNIVGQSNVPKDATVHELTSNTIWFIEHLYDHFDVIGSILAQDVLYSTQLDTILMKKALPVEERNKALLAIYIKKALAELNLSIMNKCEQYNDQATKHLFRLNNIHYILKSLQRSNLIDLVTLAEPECEHSYMEMIRELKASYQKTWSKMLVGIYSLDELPKPVAGKVKDKDRSVLKERFSNFNKDFEEACKIQRGISIPDVILREGIKRDNVEHILPIYNRFYEIYSGVHFSKNPDKYVKYRQHEINAMLSKLFDDSA.

The residue at position 236 (serine 236) is a Phosphoserine. The segment at 236–259 (SWGHEALRPRHSGRQTEPKKTTSA) is disordered.

It belongs to the EXO70 family. In terms of assembly, the exocyst complex is composed of Sec3/Exoc1, Sec5/Exoc2, Sec6/Exoc3, Sec8/Exoc4, Sec10/Exoc5, Sec15/Exoc6, Exo70/Exoc7 and Exo84/Exoc8.

Its function is as follows. Required for exocytosis. Thought to function in intracellular vesicle targeting and docking before SNARE complex formation. The sequence is that of Exocyst complex component 7 from Drosophila melanogaster (Fruit fly).